The chain runs to 334 residues: Methionyl-tRNA formyltransferase (334 aa).

Serine 111–proline 114 is a binding site for (6S)-5,6,7,8-tetrahydrofolate.

This sequence belongs to the Fmt family.

It carries out the reaction L-methionyl-tRNA(fMet) + (6R)-10-formyltetrahydrofolate = N-formyl-L-methionyl-tRNA(fMet) + (6S)-5,6,7,8-tetrahydrofolate + H(+). Functionally, attaches a formyl group to the free amino group of methionyl-tRNA(fMet). The formyl group appears to play a dual role in the initiator identity of N-formylmethionyl-tRNA by promoting its recognition by IF2 and preventing the misappropriation of this tRNA by the elongation apparatus. The chain is Methionyl-tRNA formyltransferase from Trichormus variabilis (strain ATCC 29413 / PCC 7937) (Anabaena variabilis).